The sequence spans 206 residues: Methylthioribulose-1-phosphate dehydratase (206 aa).

Residues H96 and H98 each coordinate Zn(2+).

The protein belongs to the aldolase class II family. MtnB subfamily. Zn(2+) is required as a cofactor.

It catalyses the reaction 5-(methylsulfanyl)-D-ribulose 1-phosphate = 5-methylsulfanyl-2,3-dioxopentyl phosphate + H2O. Its pathway is amino-acid biosynthesis; L-methionine biosynthesis via salvage pathway; L-methionine from S-methyl-5-thio-alpha-D-ribose 1-phosphate: step 2/6. Its function is as follows. Catalyzes the dehydration of methylthioribulose-1-phosphate (MTRu-1-P) into 2,3-diketo-5-methylthiopentyl-1-phosphate (DK-MTP-1-P). The protein is Methylthioribulose-1-phosphate dehydratase of Exiguobacterium sibiricum (strain DSM 17290 / CCUG 55495 / CIP 109462 / JCM 13490 / 255-15).